Reading from the N-terminus, the 91-residue chain is Large ribosomal subunit protein uL23c (91 aa).

This sequence belongs to the universal ribosomal protein uL23 family. In terms of assembly, part of the 50S ribosomal subunit.

It localises to the plastid. The protein resides in the chloroplast. Binds to 23S rRNA. In Anthoceros angustus (Hornwort), this protein is Large ribosomal subunit protein uL23c (rpl23).